The primary structure comprises 102 residues: NADH-quinone oxidoreductase subunit K (102 aa).

The next 3 helical transmembrane spans lie at 5-25 (ALTG…FGVL), 30-50 (ILFQ…AFIA), and 63-83 (MFVL…ALFL).

It belongs to the complex I subunit 4L family. As to quaternary structure, NDH-1 is composed of 14 different subunits. Subunits NuoA, H, J, K, L, M, N constitute the membrane sector of the complex.

It localises to the cell inner membrane. The enzyme catalyses a quinone + NADH + 5 H(+)(in) = a quinol + NAD(+) + 4 H(+)(out). Its function is as follows. NDH-1 shuttles electrons from NADH, via FMN and iron-sulfur (Fe-S) centers, to quinones in the respiratory chain. The immediate electron acceptor for the enzyme in this species is believed to be ubiquinone. Couples the redox reaction to proton translocation (for every two electrons transferred, four hydrogen ions are translocated across the cytoplasmic membrane), and thus conserves the redox energy in a proton gradient. The sequence is that of NADH-quinone oxidoreductase subunit K from Rhodopseudomonas palustris (strain BisB18).